The following is a 137-amino-acid chain: MSRTFIMIKPDGVKNKHVGNILSRIEKEGFKILGLKYLKLSLEDAKQFYKVHSARPFYNDLCNYMSSGPIVAAALERDNAVLHWREVIGATDPKEAAAGTIRALYAESKEANAVHGSDSDDNAALEISFFFKGNELF.

ATP is bound by residues Lys9, Phe57, Arg85, Thr91, Arg102, and Asn112. Residue His115 is the Pros-phosphohistidine intermediate of the active site.

It belongs to the NDK family. As to quaternary structure, homotetramer. Mg(2+) is required as a cofactor.

The protein resides in the cytoplasm. The enzyme catalyses a 2'-deoxyribonucleoside 5'-diphosphate + ATP = a 2'-deoxyribonucleoside 5'-triphosphate + ADP. The catalysed reaction is a ribonucleoside 5'-diphosphate + ATP = a ribonucleoside 5'-triphosphate + ADP. In terms of biological role, major role in the synthesis of nucleoside triphosphates other than ATP. The ATP gamma phosphate is transferred to the NDP beta phosphate via a ping-pong mechanism, using a phosphorylated active-site intermediate. The chain is Nucleoside diphosphate kinase from Leptospira interrogans serogroup Icterohaemorrhagiae serovar Lai (strain 56601).